The primary structure comprises 677 residues: uncharacterized protein (677 aa).

3 consecutive transmembrane segments (helical) span residues 80 to 102 (ILSL…RASF), 338 to 360 (ALLS…LFGF), and 367 to 386 (LVAM…LLSL). The disordered stretch occupies residues 523–556 (DEAASLPSDSSPEEDLDPLEEVESIEGTAEESTR). The segment covering 533-546 (SPEEDLDPLEEVES) has biased composition (acidic residues).

The protein resides in the cell membrane. This is an uncharacterized protein from Treponema pallidum (strain Nichols).